Reading from the N-terminus, the 302-residue chain is Arginase (302 aa).

Residues His103, Asp126, His128, and Asp130 each coordinate Mn(2+). Substrate is bound by residues 128 to 132 (HGDLN), 139 to 141 (SGN), and Asp180. Asp229 and Asp231 together coordinate Mn(2+). The substrate site is built by Thr243 and Glu274.

Belongs to the arginase family. Mn(2+) serves as cofactor.

It catalyses the reaction L-arginine + H2O = urea + L-ornithine. It functions in the pathway nitrogen metabolism; urea cycle; L-ornithine and urea from L-arginine: step 1/1. The protein is Arginase (arg) of Staphylococcus aureus (strain MRSA252).